The following is a 283-amino-acid chain: S-adenosylmethionine mitochondrial carrier protein homolog (283 aa).

3 Solcar repeats span residues 11–84 (LKFF…GKQF), 93–178 (DSPY…FKLQ), and 187–275 (STPF…TTRI). A run of 6 helical transmembrane segments spans residues 14–34 (FHAL…LFPI), 55–75 (GIYK…ALFF), 99–119 (MAAA…VEIA), 152–172 (RGFG…FPLW), 190–210 (FSVA…TTPL), and 248–268 (FAGF…FFGF).

The protein belongs to the mitochondrial carrier (TC 2.A.29) family.

Its subcellular location is the mitochondrion inner membrane. Functionally, mitochondrial solute carriers shuttle metabolites, nucleotides, and cofactors through the mitochondrial inner membrane. May mediate the transport of S-adenosylmethionine (SAM) into the mitochondria. The chain is S-adenosylmethionine mitochondrial carrier protein homolog from Drosophila melanogaster (Fruit fly).